The chain runs to 52 residues: ATP synthase protein 8 (52 aa).

Residues 7–27 (MKWFLIYFIYLLIFYLFIMLI) traverse the membrane as a helical segment.

It belongs to the ATPase protein 8 family. F-type ATPases have 2 components, CF(1) - the catalytic core - and CF(0) - the membrane proton channel.

It localises to the mitochondrion membrane. Functionally, mitochondrial membrane ATP synthase (F(1)F(0) ATP synthase or Complex V) produces ATP from ADP in the presence of a proton gradient across the membrane which is generated by electron transport complexes of the respiratory chain. F-type ATPases consist of two structural domains, F(1) - containing the extramembraneous catalytic core and F(0) - containing the membrane proton channel, linked together by a central stalk and a peripheral stalk. During catalysis, ATP synthesis in the catalytic domain of F(1) is coupled via a rotary mechanism of the central stalk subunits to proton translocation. Part of the complex F(0) domain. Minor subunit located with subunit a in the membrane. This chain is ATP synthase protein 8 (mt:ATPase8), found in Apis mellifera ligustica (Common honeybee).